Consider the following 315-residue polypeptide: tRNA dimethylallyltransferase (315 aa).

An ATP-binding site is contributed by 18–25 (GPTASGKT). Position 20–25 (20–25 (TASGKT)) interacts with substrate. Interaction with substrate tRNA stretches follow at residues 43–46 (DSAL), 167–171 (QRLSR), and 248–253 (RCVGYR).

This sequence belongs to the IPP transferase family. Monomer. It depends on Mg(2+) as a cofactor.

It carries out the reaction adenosine(37) in tRNA + dimethylallyl diphosphate = N(6)-dimethylallyladenosine(37) in tRNA + diphosphate. Catalyzes the transfer of a dimethylallyl group onto the adenine at position 37 in tRNAs that read codons beginning with uridine, leading to the formation of N6-(dimethylallyl)adenosine (i(6)A). This chain is tRNA dimethylallyltransferase, found in Pseudoalteromonas atlantica (strain T6c / ATCC BAA-1087).